A 129-amino-acid polypeptide reads, in one-letter code: Small ribosomal subunit protein uS11 (129 aa).

This sequence belongs to the universal ribosomal protein uS11 family. In terms of assembly, part of the 30S ribosomal subunit. Interacts with proteins S7 and S18. Binds to IF-3.

Functionally, located on the platform of the 30S subunit, it bridges several disparate RNA helices of the 16S rRNA. Forms part of the Shine-Dalgarno cleft in the 70S ribosome. The protein is Small ribosomal subunit protein uS11 of Bartonella bacilliformis (strain ATCC 35685 / KC583 / Herrer 020/F12,63).